The primary structure comprises 380 residues: 12-oxophytodienoate reductase 1 (380 aa).

FMN-binding positions include 35 to 37 (PLT), alanine 68, and glutamine 110. 182-185 (HGAH) lines the substrate pocket. Residue tyrosine 187 is the Proton donor of the active site. Position 234 (arginine 234) interacts with FMN. Arginine 275 is a substrate binding site. FMN is bound by residues glycine 305 and 326–327 (GR).

Belongs to the NADH:flavin oxidoreductase/NADH oxidase family. The cofactor is FMN.

The catalysed reaction is (1S,2S)-OPC-8 + NADP(+) = (9S,13S,15Z)-12-oxophyto-10,15-dienoate + NADPH + H(+). It participates in lipid metabolism; oxylipin biosynthesis. Its function is as follows. Probably involved in the biosynthesis or metabolism of oxylipin signaling molecules. In vitro, reduces cis(-)-12-oxophytodienoic acid (cis(-)-OPDA) and to cis(-)-OPC-8:0. The protein is 12-oxophytodienoate reductase 1 of Oryza sativa subsp. japonica (Rice).